Consider the following 491-residue polypeptide: MSQAGVKTKQAGKIVQIVGPVMDVAFQPGSMPNIYNALIVKGRNGAGQEVSVVCEVQQLLGDGLVRAVSMSATDGLMRGMEVTDTGRALSVPVGPTTLGRIFNVLGEPVDNMGPVGNEKTLPIHREAPAFVDLDTKLSIFETGIKVVDLLAPYRRGGKIGLFGGAGVGKTVLIMELINNIAKAHGGVSVFGGVGERTREGNDLYMEMCESKVINKADVKSSKVALVYGQMNEPPGARMRVGLTALTMAEYFRDVNNQDVLLFIDNIFRFVQAGSEVSALLGRMPSAVGYQPTLATEMGGLQERITSTKDGSITSIQAVYVPADDLTDPAPATTFAHLDATTVLSRNLAAKGIYPAVDPLDSTSTMLQPWILGDDHYGTAQRVKQTLQRYKELQDIIAILGLDELSEEDRMIVARARKIERFLSQPFFVAEVFTGAPGKYVPLAESIQGFKLILSGELDSLPESAFYLVGNIEEAIAKAASIQAAAAAAAAA.

163–170 (GGAGVGKT) provides a ligand contact to ATP.

It belongs to the ATPase alpha/beta chains family. F-type ATPases have 2 components, CF(1) - the catalytic core - and CF(0) - the membrane proton channel. CF(1) has five subunits: alpha(3), beta(3), gamma(1), delta(1), epsilon(1). CF(0) has four main subunits: a(1), b(1), b'(1) and c(9-12).

The protein localises to the plastid. It localises to the chloroplast thylakoid membrane. The enzyme catalyses ATP + H2O + 4 H(+)(in) = ADP + phosphate + 5 H(+)(out). Functionally, produces ATP from ADP in the presence of a proton gradient across the membrane. The catalytic sites are hosted primarily by the beta subunits. The polypeptide is ATP synthase subunit beta, chloroplastic (Nephroselmis olivacea (Green alga)).